The sequence spans 180 residues: Large ribosomal subunit protein uL6 (180 aa).

The protein belongs to the universal ribosomal protein uL6 family. In terms of assembly, part of the 50S ribosomal subunit.

Functionally, this protein binds to the 23S rRNA, and is important in its secondary structure. It is located near the subunit interface in the base of the L7/L12 stalk, and near the tRNA binding site of the peptidyltransferase center. This Borrelia turicatae (strain 91E135) protein is Large ribosomal subunit protein uL6.